The chain runs to 359 residues: 4-hydroxy-3-methylbut-2-en-1-yl diphosphate synthase (flavodoxin) (359 aa).

[4Fe-4S] cluster-binding residues include Cys264, Cys267, Cys299, and Glu306.

This sequence belongs to the IspG family. [4Fe-4S] cluster serves as cofactor.

The catalysed reaction is (2E)-4-hydroxy-3-methylbut-2-enyl diphosphate + oxidized [flavodoxin] + H2O + 2 H(+) = 2-C-methyl-D-erythritol 2,4-cyclic diphosphate + reduced [flavodoxin]. It functions in the pathway isoprenoid biosynthesis; isopentenyl diphosphate biosynthesis via DXP pathway; isopentenyl diphosphate from 1-deoxy-D-xylulose 5-phosphate: step 5/6. Functionally, converts 2C-methyl-D-erythritol 2,4-cyclodiphosphate (ME-2,4cPP) into 1-hydroxy-2-methyl-2-(E)-butenyl 4-diphosphate. The polypeptide is 4-hydroxy-3-methylbut-2-en-1-yl diphosphate synthase (flavodoxin) (Helicobacter pylori (strain HPAG1)).